The sequence spans 134 residues: uncharacterized protein (134 aa).

This is an uncharacterized protein from Human cytomegalovirus (strain AD169) (HHV-5).